Here is a 375-residue protein sequence, read N- to C-terminus: Methylthioribose-1-phosphate isomerase (375 aa).

D259 acts as the Proton donor in catalysis.

This sequence belongs to the eIF-2B alpha/beta/delta subunits family. MtnA subfamily.

Its subcellular location is the cytoplasm. The protein resides in the nucleus. The enzyme catalyses 5-(methylsulfanyl)-alpha-D-ribose 1-phosphate = 5-(methylsulfanyl)-D-ribulose 1-phosphate. The protein operates within amino-acid biosynthesis; L-methionine biosynthesis via salvage pathway; L-methionine from S-methyl-5-thio-alpha-D-ribose 1-phosphate: step 1/6. In terms of biological role, catalyzes the interconversion of methylthioribose-1-phosphate (MTR-1-P) into methylthioribulose-1-phosphate (MTRu-1-P). The chain is Methylthioribose-1-phosphate isomerase from Populus trichocarpa (Western balsam poplar).